A 329-amino-acid polypeptide reads, in one-letter code: 7,8-didemethyl-8-hydroxy-5-deazariboflavin synthase (329 aa).

Residues Met-1–Asn-235 form the Radical SAM core domain. [4Fe-4S] cluster is bound by residues Cys-9, Cys-13, and Cys-16.

Belongs to the radical SAM superfamily. CofG family. Consists of two subunits, CofG and CofH. [4Fe-4S] cluster is required as a cofactor.

It carries out the reaction 5-amino-5-(4-hydroxybenzyl)-6-(D-ribitylimino)-5,6-dihydrouracil + S-adenosyl-L-methionine = 7,8-didemethyl-8-hydroxy-5-deazariboflavin + 5'-deoxyadenosine + L-methionine + NH4(+) + H(+). Its pathway is cofactor biosynthesis; coenzyme F0 biosynthesis. Its function is as follows. Catalyzes the radical-mediated synthesis of 7,8-didemethyl-8-hydroxy-5-deazariboflavin from 5-amino-5-(4-hydroxybenzyl)-6-(D-ribitylimino)-5,6-dihydrouracil. The chain is 7,8-didemethyl-8-hydroxy-5-deazariboflavin synthase from Methanosarcina acetivorans (strain ATCC 35395 / DSM 2834 / JCM 12185 / C2A).